A 96-amino-acid polypeptide reads, in one-letter code: Large ribosomal subunit protein uL23 (96 aa).

The protein belongs to the universal ribosomal protein uL23 family. As to quaternary structure, part of the 50S ribosomal subunit. Contacts protein L29, and trigger factor when it is bound to the ribosome.

Its function is as follows. One of the early assembly proteins it binds 23S rRNA. One of the proteins that surrounds the polypeptide exit tunnel on the outside of the ribosome. Forms the main docking site for trigger factor binding to the ribosome. This is Large ribosomal subunit protein uL23 from Alkaliphilus oremlandii (strain OhILAs) (Clostridium oremlandii (strain OhILAs)).